The sequence spans 271 residues: Putative phosphoenolpyruvate synthase regulatory protein (271 aa).

ADP is bound at residue 152-159; sequence GVSRCGKT.

This sequence belongs to the pyruvate, phosphate/water dikinase regulatory protein family. PSRP subfamily.

It catalyses the reaction [pyruvate, water dikinase] + ADP = [pyruvate, water dikinase]-phosphate + AMP + H(+). It carries out the reaction [pyruvate, water dikinase]-phosphate + phosphate + H(+) = [pyruvate, water dikinase] + diphosphate. In terms of biological role, bifunctional serine/threonine kinase and phosphorylase involved in the regulation of the phosphoenolpyruvate synthase (PEPS) by catalyzing its phosphorylation/dephosphorylation. The sequence is that of Putative phosphoenolpyruvate synthase regulatory protein from Legionella pneumophila (strain Paris).